Consider the following 600-residue polypeptide: Elongation factor 4 (600 aa).

The 183-residue stretch at 5-187 folds into the tr-type G domain; it reads KYIRNFSIIA…AIVNKLPPPK (183 aa). GTP is bound by residues 17 to 22 and 134 to 137; these read DHGKST and NKID.

It belongs to the TRAFAC class translation factor GTPase superfamily. Classic translation factor GTPase family. LepA subfamily.

The protein resides in the cell inner membrane. It carries out the reaction GTP + H2O = GDP + phosphate + H(+). Its function is as follows. Required for accurate and efficient protein synthesis under certain stress conditions. May act as a fidelity factor of the translation reaction, by catalyzing a one-codon backward translocation of tRNAs on improperly translocated ribosomes. Back-translocation proceeds from a post-translocation (POST) complex to a pre-translocation (PRE) complex, thus giving elongation factor G a second chance to translocate the tRNAs correctly. Binds to ribosomes in a GTP-dependent manner. The polypeptide is Elongation factor 4 (Rickettsia bellii (strain OSU 85-389)).